We begin with the raw amino-acid sequence, 361 residues long: UDP-N-acetylglucosamine--N-acetylmuramyl-(pentapeptide) pyrophosphoryl-undecaprenol N-acetylglucosamine transferase (361 aa).

UDP-N-acetyl-alpha-D-glucosamine-binding positions include 21-23 (TGG), Asn-131, Arg-172, Ser-195, Ile-250, and Gln-295.

It belongs to the glycosyltransferase 28 family. MurG subfamily.

It localises to the cell inner membrane. The enzyme catalyses di-trans,octa-cis-undecaprenyl diphospho-N-acetyl-alpha-D-muramoyl-L-alanyl-D-glutamyl-meso-2,6-diaminopimeloyl-D-alanyl-D-alanine + UDP-N-acetyl-alpha-D-glucosamine = di-trans,octa-cis-undecaprenyl diphospho-[N-acetyl-alpha-D-glucosaminyl-(1-&gt;4)]-N-acetyl-alpha-D-muramoyl-L-alanyl-D-glutamyl-meso-2,6-diaminopimeloyl-D-alanyl-D-alanine + UDP + H(+). Its pathway is cell wall biogenesis; peptidoglycan biosynthesis. In terms of biological role, cell wall formation. Catalyzes the transfer of a GlcNAc subunit on undecaprenyl-pyrophosphoryl-MurNAc-pentapeptide (lipid intermediate I) to form undecaprenyl-pyrophosphoryl-MurNAc-(pentapeptide)GlcNAc (lipid intermediate II). The protein is UDP-N-acetylglucosamine--N-acetylmuramyl-(pentapeptide) pyrophosphoryl-undecaprenol N-acetylglucosamine transferase of Solibacter usitatus (strain Ellin6076).